Reading from the N-terminus, the 282-residue chain is Acetylglutamate kinase (282 aa).

Substrate is bound by residues 62-63, Arg84, and Asn178; that span reads GG. Residues Lys196, Ser214, and 266-269 each bind L-arginine; that span reads EIFS.

In terms of assembly, homohexamer.

The protein resides in the cytoplasm. It catalyses the reaction N-acetyl-L-glutamate + ATP = N-acetyl-L-glutamyl 5-phosphate + ADP. The protein operates within amino-acid biosynthesis; L-arginine biosynthesis; N(2)-acetyl-L-ornithine from L-glutamate: step 2/4. With respect to regulation, allosterically inhibited by arginine. Functionally, catalyzes the ATP-dependent phosphorylation of N-acetyl-L-glutamate. In Thermotoga maritima (strain ATCC 43589 / DSM 3109 / JCM 10099 / NBRC 100826 / MSB8), this protein is Acetylglutamate kinase.